We begin with the raw amino-acid sequence, 70 residues long: Conotoxin Im23.3 (70 aa).

Positions 1 to 22 (MIMRMTLTLFVLVVMTAASASG) are cleaved as a signal peptide. A propeptide spanning residues 23–28 (DALTEA) is cleaved from the precursor. Disulfide bonds link Cys-34–Cys-41, Cys-45–Cys-53, and Cys-54–Cys-69.

Belongs to the conotoxin K superfamily. In terms of tissue distribution, expressed by the venom duct.

The protein localises to the secreted. Functionally, neurotoxin that induces excitatory symptoms in mice following intracranial administration. No symptoms are observed after intraperitoneal and intravenous (tail vein) injections. The sequence is that of Conotoxin Im23.3 from Conus imperialis (Imperial cone).